Reading from the N-terminus, the 177-residue chain is MSRVAKAPVVVPAGVDVKINGQVITIKGKNGELTRTLNDAVEVKHADNALTFGPRDGYADGWAQAGTARALLNSMVIGVTEGFTKKLQLVGVGYRAAVKGNVVNLALGFSHPVDHQLPAGITAECPTQTEIVLKGADKQVIGQVAADLRAYRRPEPYKGKGVRYADEVVRTKEAKKK.

Belongs to the universal ribosomal protein uL6 family. In terms of assembly, part of the 50S ribosomal subunit.

This protein binds to the 23S rRNA, and is important in its secondary structure. It is located near the subunit interface in the base of the L7/L12 stalk, and near the tRNA binding site of the peptidyltransferase center. The protein is Large ribosomal subunit protein uL6 of Klebsiella pneumoniae subsp. pneumoniae (strain ATCC 700721 / MGH 78578).